Reading from the N-terminus, the 1094-residue chain is Isoleucine--tRNA ligase (1094 aa).

A 'HIGH' region motif is present at residues 53 to 63; that stretch reads PFANGLPHYGH. The 'KMSKS' region signature appears at 624–628; it reads KLSKR. K627 contributes to the ATP binding site.

This sequence belongs to the class-I aminoacyl-tRNA synthetase family. IleS type 2 subfamily. In terms of assembly, monomer. It depends on Zn(2+) as a cofactor.

Its subcellular location is the cytoplasm. It catalyses the reaction tRNA(Ile) + L-isoleucine + ATP = L-isoleucyl-tRNA(Ile) + AMP + diphosphate. Catalyzes the attachment of isoleucine to tRNA(Ile). As IleRS can inadvertently accommodate and process structurally similar amino acids such as valine, to avoid such errors it has two additional distinct tRNA(Ile)-dependent editing activities. One activity is designated as 'pretransfer' editing and involves the hydrolysis of activated Val-AMP. The other activity is designated 'posttransfer' editing and involves deacylation of mischarged Val-tRNA(Ile). The chain is Isoleucine--tRNA ligase from Rickettsia felis (strain ATCC VR-1525 / URRWXCal2) (Rickettsia azadi).